Reading from the N-terminus, the 254-residue chain is Thiazole synthase (254 aa).

The Schiff-base intermediate with DXP role is filled by K95. 1-deoxy-D-xylulose 5-phosphate is bound by residues G156, 182 to 183 (AG), and 204 to 205 (NT).

It belongs to the ThiG family. As to quaternary structure, homotetramer. Forms heterodimers with either ThiH or ThiS.

The protein resides in the cytoplasm. The catalysed reaction is [ThiS sulfur-carrier protein]-C-terminal-Gly-aminoethanethioate + 2-iminoacetate + 1-deoxy-D-xylulose 5-phosphate = [ThiS sulfur-carrier protein]-C-terminal Gly-Gly + 2-[(2R,5Z)-2-carboxy-4-methylthiazol-5(2H)-ylidene]ethyl phosphate + 2 H2O + H(+). It participates in cofactor biosynthesis; thiamine diphosphate biosynthesis. Catalyzes the rearrangement of 1-deoxy-D-xylulose 5-phosphate (DXP) to produce the thiazole phosphate moiety of thiamine. Sulfur is provided by the thiocarboxylate moiety of the carrier protein ThiS. In vitro, sulfur can be provided by H(2)S. In Shewanella baltica (strain OS223), this protein is Thiazole synthase.